Reading from the N-terminus, the 418-residue chain is MTAFKSDFMNVLQSRGFIHQISDPDSLDALAAKGEVVAYVGYDCTAASLHVGHLLSIMMLHWLQATGNKPIALMGGGTTRVGDPSGRDETRKILTYEQIDANKESIKGTFSKFIKFGDGHSDALMADNAEWLTKLNYIEMLREIGRHFSINRMLTMDSVKLRLDREQELSFIEFNYMILQSYDFVELARRYKCNLQMGGSDQWGNIVTGVDLGRRMGTHQLHALTCPLLTTASGAKMGKTAAGAVWLNGDMLAPYDYWQYWRNTEDADVGRFLKLFTLLPMDEIERLSKLQGAEINDAKKILATEATALMHGREAADKAETTARTTFEQGGTAQDLPSVEISRGELDAGIGVLVAFAEKTGLVASNGEARRQIKAGGLKVNDAPVTDEKMTLTATDLSSDGVIKLSMGKKKHVLLRLA.

Position 39 (Tyr39) interacts with L-tyrosine. A 'HIGH' region motif is present at residues 44-53 (CTAASLHVGH). The L-tyrosine site is built by Tyr176 and Gln180. Positions 236–240 (KMGKT) match the 'KMSKS' region motif. An ATP-binding site is contributed by Lys239. Residues 350-418 (IGVLVAFAEK…KKKHVLLRLA (69 aa)) enclose the S4 RNA-binding domain.

This sequence belongs to the class-I aminoacyl-tRNA synthetase family. TyrS type 1 subfamily. Homodimer.

Its subcellular location is the cytoplasm. It carries out the reaction tRNA(Tyr) + L-tyrosine + ATP = L-tyrosyl-tRNA(Tyr) + AMP + diphosphate + H(+). Its function is as follows. Catalyzes the attachment of tyrosine to tRNA(Tyr) in a two-step reaction: tyrosine is first activated by ATP to form Tyr-AMP and then transferred to the acceptor end of tRNA(Tyr). The polypeptide is Tyrosine--tRNA ligase (Rhodopseudomonas palustris (strain ATCC BAA-98 / CGA009)).